The primary structure comprises 337 residues: Probable sulfurtransferase (337 aa).

Gly-83 is a binding site for ATP. Cys-172 and Cys-175 together coordinate [4Fe-4S] cluster. ATP contacts are provided by Lys-179 and Gly-206. Cys-284 serves as a coordination point for [4Fe-4S] cluster.

This sequence belongs to the TtcA family. [4Fe-4S] cluster is required as a cofactor. It depends on Mg(2+) as a cofactor.

In Methanocaldococcus jannaschii (strain ATCC 43067 / DSM 2661 / JAL-1 / JCM 10045 / NBRC 100440) (Methanococcus jannaschii), this protein is Probable sulfurtransferase.